We begin with the raw amino-acid sequence, 441 residues long: Xaa-Pro dipeptidase (441 aa).

Residues Asp-244, Asp-255, His-336, Glu-381, and Glu-420 each contribute to the Mn(2+) site.

This sequence belongs to the peptidase M24B family. Bacterial-type prolidase subfamily. Requires Mn(2+) as cofactor.

The enzyme catalyses Xaa-L-Pro dipeptide + H2O = an L-alpha-amino acid + L-proline. Functionally, splits dipeptides with a prolyl residue in the C-terminal position. The sequence is that of Xaa-Pro dipeptidase from Xanthomonas axonopodis pv. citri (strain 306).